Here is a 165-residue protein sequence, read N- to C-terminus: Ribosome maturation factor RimM (165 aa).

The region spanning 94 to 163 (EDEFYIADLN…KDYVTLNYQR (70 aa)) is the PRC barrel domain.

Belongs to the RimM family. Binds ribosomal protein uS19.

It localises to the cytoplasm. In terms of biological role, an accessory protein needed during the final step in the assembly of 30S ribosomal subunit, possibly for assembly of the head region. Essential for efficient processing of 16S rRNA. May be needed both before and after RbfA during the maturation of 16S rRNA. It has affinity for free ribosomal 30S subunits but not for 70S ribosomes. In Rickettsia akari (strain Hartford), this protein is Ribosome maturation factor RimM.